Consider the following 105-residue polypeptide: MAIRYPMAVGLNKGHKVTKNVSKPRHCRRRGRLTKHTKFVRDMIREVCGFAPYERRAMELLKVSKDKRALKFIKKRVGTHIRAKRKREELSNVLAAMRKAAAKKD.

It belongs to the eukaryotic ribosomal protein eL36 family. In terms of assembly, component of the large ribosomal subunit.

Its subcellular location is the cytoplasm. It is found in the cytosol. In terms of biological role, component of the large ribosomal subunit. The ribosome is a large ribonucleoprotein complex responsible for the synthesis of proteins in the cell. This Hydrophis hardwickii (Hardwick's spine-bellied seasnake) protein is Large ribosomal subunit protein eL36 (RPL36).